The chain runs to 117 residues: Large ribosomal subunit protein uL18 (117 aa).

The protein belongs to the universal ribosomal protein uL18 family. Part of the 50S ribosomal subunit; part of the 5S rRNA/L5/L18/L25 subcomplex. Contacts the 5S and 23S rRNAs.

This is one of the proteins that bind and probably mediate the attachment of the 5S RNA into the large ribosomal subunit, where it forms part of the central protuberance. The protein is Large ribosomal subunit protein uL18 of Enterobacter sp. (strain 638).